Reading from the N-terminus, the 72-residue chain is Protein kish-A (72 aa).

Residues 1 to 26 form the signal peptide; it reads MSAIFNFQSLLTVILLLICTCAYIRS. At 27-53 the chain is on the extracellular side; sequence LAPSILDRNKTGLLGIFWKCARIGERK. An N-linked (GlcNAc...) asparagine glycan is attached at N35. The chain crosses the membrane as a helical span at residues 54–71; that stretch reads SPYVAICCIVMAFSILFI. Position 72 (Q72) is a topological domain, cytoplasmic.

Belongs to the KISH family.

The protein localises to the golgi apparatus membrane. In terms of biological role, involved in the early part of the secretory pathway. This chain is Protein kish-A (Tmem167a), found in Mus musculus (Mouse).